Here is a 342-residue protein sequence, read N- to C-terminus: RNA 3'-terminal phosphate cyclase (342 aa).

Residues Gln102 and 283–287 contribute to the ATP site; that span reads HLADQ. The active-site Tele-AMP-histidine intermediate is the His308.

It belongs to the RNA 3'-terminal cyclase family. Type 1 subfamily.

It localises to the cytoplasm. It catalyses the reaction a 3'-end 3'-phospho-ribonucleotide-RNA + ATP = a 3'-end 2',3'-cyclophospho-ribonucleotide-RNA + AMP + diphosphate. Catalyzes the conversion of 3'-phosphate to a 2',3'-cyclic phosphodiester at the end of RNA. The mechanism of action of the enzyme occurs in 3 steps: (A) adenylation of the enzyme by ATP; (B) transfer of adenylate to an RNA-N3'P to produce RNA-N3'PP5'A; (C) and attack of the adjacent 2'-hydroxyl on the 3'-phosphorus in the diester linkage to produce the cyclic end product. The biological role of this enzyme is unknown but it is likely to function in some aspects of cellular RNA processing. The chain is RNA 3'-terminal phosphate cyclase from Pseudomonas fluorescens (strain ATCC BAA-477 / NRRL B-23932 / Pf-5).